The chain runs to 450 residues: UDP-N-acetylmuramoylalanine--D-glutamate ligase (450 aa).

119-125 contributes to the ATP binding site; that stretch reads GSNGKTT.

It belongs to the MurCDEF family.

The protein resides in the cytoplasm. The catalysed reaction is UDP-N-acetyl-alpha-D-muramoyl-L-alanine + D-glutamate + ATP = UDP-N-acetyl-alpha-D-muramoyl-L-alanyl-D-glutamate + ADP + phosphate + H(+). The protein operates within cell wall biogenesis; peptidoglycan biosynthesis. Cell wall formation. Catalyzes the addition of glutamate to the nucleotide precursor UDP-N-acetylmuramoyl-L-alanine (UMA). The polypeptide is UDP-N-acetylmuramoylalanine--D-glutamate ligase (Streptococcus pneumoniae (strain Hungary19A-6)).